The chain runs to 420 residues: Putative RNA-binding protein Alsin2 (420 aa).

Residues 99–130 are a coiled coil; sequence IADCDRRTDSAKQRLKETQEELTAEVAEKANA. Basic and acidic residues-rich tracts occupy residues 242 to 259, 282 to 363, and 373 to 399; these read AELK…EGRG, RERQ…RFGD, and HHRD…HFRD. Residues 242–420 form a disordered region; that stretch reads AELKRTGKMT…SYSRERNYRR (179 aa).

Belongs to the Luc7 family. In terms of assembly, interacts with x16 (via Arg/Ser-rich region).

Its function is as follows. May bind to RNA via its Arg/Ser-rich domain. The polypeptide is Putative RNA-binding protein Alsin2 (Drosophila melanogaster (Fruit fly)).